The chain runs to 457 residues: Forkhead box protein N3 (457 aa).

The disordered stretch occupies residues 1 to 24 (MGPVMPASKKAESSGISVSSGLSQ). The segment covering 13 to 23 (SSGISVSSGLS) has biased composition (low complexity). A phosphoserine mark is found at Ser83, Ser85, and Ser97. Residues 86–109 (PVQDLDDDTPPSPAHSDMPYDARQ) are disordered. The fork-head DNA-binding region spans 114–210 (KPPYSFSCLI…QALKKTPYHP (97 aa)). The tract at residues 285–422 (RTESEPPCGS…PESDDEEMKE (138 aa)) is disordered. Composition is skewed to low complexity over residues 308-331 (SSAK…SSSS) and 342-353 (GSQEGSEGSFQS). Basic and acidic residues predominate over residues 354–376 (HESHSEPEEEDRKPSPKEGKDAL). Positions 384–396 (QHKKRQHFAKARK) are enriched in basic residues. Residue Ser415 is modified to Phosphoserine.

In terms of assembly, interacts through its C-terminus with the C-terminus of SNW1/SKIP.

It is found in the nucleus. Acts as a transcriptional repressor. May be involved in DNA damage-inducible cell cycle arrests (checkpoints). This Mus musculus (Mouse) protein is Forkhead box protein N3 (Foxn3).